Here is a 304-residue protein sequence, read N- to C-terminus: Ribosomal RNA small subunit methyltransferase H (304 aa).

S-adenosyl-L-methionine-binding positions include 36–38 (GGH), Asp53, Phe79, Asp98, and Gln105.

Belongs to the methyltransferase superfamily. RsmH family.

It is found in the cytoplasm. The catalysed reaction is cytidine(1402) in 16S rRNA + S-adenosyl-L-methionine = N(4)-methylcytidine(1402) in 16S rRNA + S-adenosyl-L-homocysteine + H(+). Specifically methylates the N4 position of cytidine in position 1402 (C1402) of 16S rRNA. This is Ribosomal RNA small subunit methyltransferase H from Myxococcus xanthus (strain DK1622).